We begin with the raw amino-acid sequence, 85 residues long: Large ribosomal subunit protein bL27 (85 aa).

Residues 1–23 (MAHKKAGGSSRNGRDSESKRLGV) form a disordered region.

Belongs to the bacterial ribosomal protein bL27 family.

This Nitrosococcus oceani (strain ATCC 19707 / BCRC 17464 / JCM 30415 / NCIMB 11848 / C-107) protein is Large ribosomal subunit protein bL27.